Consider the following 179-residue polypeptide: Large ribosomal subunit protein uL6 (179 aa).

Belongs to the universal ribosomal protein uL6 family. In terms of assembly, part of the 50S ribosomal subunit.

Its function is as follows. This protein binds to the 23S rRNA, and is important in its secondary structure. It is located near the subunit interface in the base of the L7/L12 stalk, and near the tRNA binding site of the peptidyltransferase center. This chain is Large ribosomal subunit protein uL6, found in Bifidobacterium animalis subsp. lactis (strain AD011).